Reading from the N-terminus, the 284-residue chain is Nucleotide-binding protein SPO0713 (284 aa).

3-10 (GPSGAGRS) is a binding site for ATP. Position 50-53 (50-53 (DARN)) interacts with GTP.

This sequence belongs to the RapZ-like family.

In terms of biological role, displays ATPase and GTPase activities. This is Nucleotide-binding protein SPO0713 from Ruegeria pomeroyi (strain ATCC 700808 / DSM 15171 / DSS-3) (Silicibacter pomeroyi).